The chain runs to 114 residues: Dolichyl-diphosphooligosaccharide--protein glycosyltransferase subunit DAD1 (114 aa).

The Cytoplasmic portion of the chain corresponds to 1–30 (MPKAAGDAKLLIQSLNKAYAATPTNLKIID). A helical membrane pass occupies residues 31–51 (LYVVFAVVTALLQVVYMGIVG). Serine 52 is a topological domain (lumenal). A helical transmembrane segment spans residues 53 to 73 (FPFNSFLSGVLSCIGTAVLAV). Topologically, residues 74–93 (CHRIQVNKDNKEFKDLAPER) are cytoplasmic. A helical membrane pass occupies residues 94 to 114 (AFADFVLCSLVLHLVIMNFLG).

Belongs to the DAD/OST2 family. In terms of assembly, component of the oligosaccharyltransferase (OST) complex.

Its subcellular location is the endoplasmic reticulum membrane. It participates in protein modification; protein glycosylation. In terms of biological role, subunit of the oligosaccharyl transferase (OST) complex that catalyzes the initial transfer of a defined glycan (Glc(3)Man(9)GlcNAc(2) in eukaryotes) from the lipid carrier dolichol-pyrophosphate to an asparagine residue within an Asn-X-Ser/Thr consensus motif in nascent polypeptide chains, the first step in protein N-glycosylation. N-glycosylation occurs cotranslationally and the complex associates with the Sec61 complex at the channel-forming translocon complex that mediates protein translocation across the endoplasmic reticulum (ER). All subunits are required for a maximal enzyme activity. The protein is Dolichyl-diphosphooligosaccharide--protein glycosyltransferase subunit DAD1 (DAD1) of Hordeum vulgare (Barley).